Consider the following 108-residue polypeptide: Replication initiation control protein YabA (108 aa).

Residues His-83, Cys-85, Cys-99, and Cys-102 each contribute to the Zn(2+) site.

This sequence belongs to the YabA family. In terms of assembly, homotetramer. Interacts with both DnaA and DnaN, acting as a bridge between these two proteins. The cofactor is Zn(2+).

Its subcellular location is the cytoplasm. It is found in the nucleoid. In terms of biological role, involved in control of chromosome replication initiation. Inhibits the cooperative binding of DnaA to the oriC region, thus negatively regulating initiation of chromosome replication. Inhibits the ability of DnaA-ATP to form a helix on DNA; does not disassemble preformed DnaA-DNA helices. Decreases the residence time of DnaA on the chromosome at its binding sites (oriC, replication forks and promoter-binding sites). Tethers DnaA to the replication machinery via the DNA polymerase beta sliding clamp subunit (dnaN). Associates with oriC and other DnaA targets on the chromosome in a DnaA-dependent manner. This chain is Replication initiation control protein YabA, found in Lactococcus lactis subsp. cremoris (strain SK11).